A 98-amino-acid chain; its full sequence is Large ribosomal subunit protein uL23 (98 aa).

It belongs to the universal ribosomal protein uL23 family. As to quaternary structure, part of the 50S ribosomal subunit. Contacts protein L29, and trigger factor when it is bound to the ribosome.

Functionally, one of the early assembly proteins it binds 23S rRNA. One of the proteins that surrounds the polypeptide exit tunnel on the outside of the ribosome. Forms the main docking site for trigger factor binding to the ribosome. The polypeptide is Large ribosomal subunit protein uL23 (Methylobacterium radiotolerans (strain ATCC 27329 / DSM 1819 / JCM 2831 / NBRC 15690 / NCIMB 10815 / 0-1)).